We begin with the raw amino-acid sequence, 153 residues long: Ribosomal RNA large subunit methyltransferase H (153 aa).

Residues leucine 70, glycine 102, and 121-126 (LSSMTF) each bind S-adenosyl-L-methionine.

This sequence belongs to the RNA methyltransferase RlmH family. As to quaternary structure, homodimer.

It is found in the cytoplasm. It carries out the reaction pseudouridine(1915) in 23S rRNA + S-adenosyl-L-methionine = N(3)-methylpseudouridine(1915) in 23S rRNA + S-adenosyl-L-homocysteine + H(+). Specifically methylates the pseudouridine at position 1915 (m3Psi1915) in 23S rRNA. This Dictyoglomus thermophilum (strain ATCC 35947 / DSM 3960 / H-6-12) protein is Ribosomal RNA large subunit methyltransferase H.